The sequence spans 688 residues: Lipase (688 aa).

The first 35 residues, 1 to 35 (MKTRQNKYSIRKFSVGASSILIAALLFMGGGSAQA), serve as a signal peptide directing secretion. Positions 31-309 (GSAQAAEQQQ…KSAKQKQYKN (279 aa)) are disordered. A propeptide spans 36–302 (AEQQQDKGTV…KNEDQTNKSA (267 aa)) (removed in mature form). Residues 45-54 (VENSTTQSIG) are compositionally biased toward polar residues. The segment covering 68–79 (NKNVNEKSNVNS) has biased composition (low complexity). Basic and acidic residues-rich tracts occupy residues 84 to 95 (ESLHNETPKNED), 103 to 117 (SQNDNKSESVVEQNK), and 126 to 143 (HSEEKPQQEQVELEKHAS). Positions 144–172 (ENNQTLHSKAAQSNEDVKTKPSQLDNTAA) are enriched in polar residues. Residues 173-183 (KQEDSQKENLS) show a composition bias toward basic and acidic residues. Polar residues predominate over residues 184–211 (KQDTQSSKTTDLLRATAQNQSKDSQSTE). Positions 240–267 (SKEEPLKVDKQANPTTDKDKSSKNDKGS) are enriched in basic and acidic residues. Positions 274–289 (LESNAVATTNKQSKQQ) are enriched in polar residues. Catalysis depends on S418, which acts as the Nucleophile. D609 acts as the Charge relay system in catalysis. D647 serves as a coordination point for Ca(2+). H648 acts as the Charge relay system in catalysis. Residues D650, D655, and D658 each contribute to the Ca(2+) site.

Belongs to the AB hydrolase superfamily. Lipase family.

It localises to the secreted. It catalyses the reaction a triacylglycerol + H2O = a diacylglycerol + a fatty acid + H(+). The sequence is that of Lipase (lip) from Staphylococcus epidermidis.